We begin with the raw amino-acid sequence, 1134 residues long: Envelopment polyprotein (1134 aa).

Positions M1–A16 are cleaved as a signal peptide. The Lumenal segment spans residues L17–A484. Intrachain disulfides connect C27/C149, C61/C155, C107/C126, C131/C136, C173/C183, C208/C245, C232/C349, C374/C433, C378/C387, and C403/C422. The N-linked (GlcNAc...) asparagine; by host glycan is linked to N132. N233 and N345 each carry an N-linked (GlcNAc...) asparagine; by host glycan. N397 is a glycosylation site (N-linked (GlcNAc...) asparagine; by host). Residues L485–L504 form a helical membrane-spanning segment. The Cytoplasmic portion of the chain corresponds to L505 to Y626. Residues L514 to K531 form a binding to the ribonucleoprotein region. 2 consecutive CCHC-type zinc fingers follow at residues C543 to C563 and C568 to C589. Binding to the ribonucleoprotein stretches follow at residues Y586 to V603, Q590 to K601, and W609 to S623. The ITAM domain occupies W609–T632. The YxxL signature appears at Y613–L616. A helical transmembrane segment spans residues I627–A647. Topologically, residues E648 to W1105 are lumenal. Disulfide bonds link C734/C769, C738/C776, C750/C884, C764/C895, C779/C903, C805/C814, C822/C831, and C862/C866. Residues Y756–C776 are fusion loop. Residue N927 is glycosylated (N-linked (GlcNAc...) asparagine; by host). 5 cysteine pairs are disulfide-bonded: C969/C999, C992/C1044, C1009/C1014, C1045/C1050, and C1084/C1088. A helical membrane pass occupies residues V1106–L1125. The interval L1121–S1134 is binding to the ribonucleoprotein. Residues C1126–S1134 are Cytoplasmic-facing.

The protein belongs to the hantavirus envelope glycoprotein family. Homodimer. Homotetramer; forms heterotetrameric Gn-Gc spikes in the pre-fusion conformation. Interacts (via C-terminus) with the nucleoprotein. Interacts with host TUFM; this interaction contributes to the virus-induced degradation of mitochondria by autophagy, which leads to degradation of host MAVS and inhibition of type I interferon (IFN) responses. Interacts with host MAP1LC3B; this interaction contributes to the virus-induced degradation of mitochondria by autophagy, which leads to degradation of host MAVS and inhibition of type I interferon (IFN) responses. As to quaternary structure, homodimer. Homotetramer; forms heterotetrameric Gn-Gc spikes in the pre-fusion conformation. Homotrimer; forms homotrimer in the post-fusion conformation at acidic pH. Interacts (via C-terminus) with the nucleoprotein. In terms of processing, envelope polyprotein precursor is quickly cleaved in vivo just after synthesis, presumably by host signal peptidase.

It localises to the virion membrane. It is found in the host cell surface. The protein resides in the host Golgi apparatus membrane. The protein localises to the host endoplasmic reticulum membrane. Its subcellular location is the host mitochondrion. Its function is as follows. Forms homotetramers with glycoprotein C at the surface of the virion. Attaches the virion to host cell receptors including integrin ITGAV/ITGB3. This attachment induces virion internalization predominantly through clathrin-dependent endocytosis. Mediates the assembly and budding of infectious virus particles through its interaction with the nucleocapsid protein and the viral genome. May dysregulate normal immune and endothelial cell responses through an ITAM motif. Translocates to mitochondria, binds to host TUFM and recruits MAP1LC3B. These interactions induce mitochondrial autophagy and therefore destruction of host MAVS leading to inhibition of type I interferon (IFN) responses. Concomitant breakdown of glycoprotein N is apparently prevented by the nucleoprotein that may inhibit Gn-stimulated autophagosome-lysosome fusion. Interacts with the viral genomic RNA. In terms of biological role, forms homotetramers with glycoprotein N at the surface of the virion. Attaches the virion to host cell receptors including integrin ITGAV/ITGB3. This attachment induces virion internalization predominantly through clathrin-dependent endocytosis. Class II fusion protein that promotes fusion of viral membrane with host endosomal membrane after endocytosis of the virion. This Homo sapiens (Human) protein is Envelopment polyprotein (GP).